A 769-amino-acid polypeptide reads, in one-letter code: Calcium up-regulated protein F (769 aa).

Residues 1–21 (MINIKDISKSSNQSEEKSLKG) are disordered. 2 consecutive Ricin B-type lectin domains span residues 25-145 (KTKY…WTTF) and 116-249 (QGNG…WGIN).

The protein belongs to the cup family.

It is found in the cytoplasm. It localises to the membrane. In terms of biological role, may play an important role in stabilizing and/or regulating the cell membrane during Ca(2+) stress or certain stages of development. In Dictyostelium discoideum (Social amoeba), this protein is Calcium up-regulated protein F (cupF).